Reading from the N-terminus, the 632-residue chain is Chaperone protein HtpG (632 aa).

Residues 1 to 339 (MTQQTMSFQA…SSDLPLNVSR (339 aa)) are a; substrate-binding. A b region spans residues 340 to 559 (EILQESRDVK…DNDMSGYLQR (220 aa)). Residues 560-632 (MLKAAGQSAP…TNALLLSRAA (73 aa)) form a c region.

The protein belongs to the heat shock protein 90 family. Homodimer.

Its subcellular location is the cytoplasm. Molecular chaperone. Has ATPase activity. In Burkholderia pseudomallei (strain 1106a), this protein is Chaperone protein HtpG.